The following is a 387-amino-acid chain: 3-ketoacyl-CoA thiolase (387 aa).

Catalysis depends on Cys91, which acts as the Acyl-thioester intermediate. Active-site proton acceptor residues include His343 and Cys373.

It belongs to the thiolase-like superfamily. Thiolase family. In terms of assembly, heterotetramer of two alpha chains (FadB) and two beta chains (FadA).

The protein localises to the cytoplasm. The enzyme catalyses an acyl-CoA + acetyl-CoA = a 3-oxoacyl-CoA + CoA. It participates in lipid metabolism; fatty acid beta-oxidation. Catalyzes the final step of fatty acid oxidation in which acetyl-CoA is released and the CoA ester of a fatty acid two carbons shorter is formed. The polypeptide is 3-ketoacyl-CoA thiolase (Photobacterium profundum (strain SS9)).